We begin with the raw amino-acid sequence, 37 residues long: Cytochrome b6-f complex subunit 5 (37 aa).

Residues 5 to 25 form a helical membrane-spanning segment; it reads LLSGVVLGLILVTLSGLFFAA.

It belongs to the PetG family. The 4 large subunits of the cytochrome b6-f complex are cytochrome b6, subunit IV (17 kDa polypeptide, PetD), cytochrome f and the Rieske protein, while the 4 small subunits are PetG, PetL, PetM and PetN. The complex functions as a dimer.

The protein localises to the cellular thylakoid membrane. Component of the cytochrome b6-f complex, which mediates electron transfer between photosystem II (PSII) and photosystem I (PSI), cyclic electron flow around PSI, and state transitions. PetG is required for either the stability or assembly of the cytochrome b6-f complex. This Trichodesmium erythraeum (strain IMS101) protein is Cytochrome b6-f complex subunit 5.